The sequence spans 142 residues: Ovocleidin-17 (142 aa).

Intrachain disulfides connect cysteine 5–cysteine 16, cysteine 33–cysteine 138, and cysteine 113–cysteine 130. The C-type lectin domain occupies 12 to 139; sequence TPGGCLGFFS…CTERNAFVCK (128 aa). Asparagine 59 is a glycosylation site (N-linked (GlcNAc...) asparagine). A phosphoserine mark is found at serine 61 and serine 67.

As to expression, expressed in the shell gland mucosa. Not detected in hen liver, magnum, isthmus, cartilage, bone or in egg white or yolk.

The protein resides in the secreted. The protein localises to the extracellular space. It localises to the extracellular matrix. Functionally, may form proteinaceous networks during the construction of the eggshell which then may control the deposition of the mineral phase. In Gallus gallus (Chicken), this protein is Ovocleidin-17.